Here is a 148-residue protein sequence, read N- to C-terminus: MEVILLEKITNLGNLGDKVNVKSGYARNFLLPQGKATAATAENVAAFEARRVELERLAAEKRSSAESRAAQLNELEITITATAGDEGKLFGSIGTADIADALTAAGLDVAKSEVRLPNGTIRQTGEYDVALHLHTDVEASIRLVVVGG.

The protein belongs to the bacterial ribosomal protein bL9 family.

Functionally, binds to the 23S rRNA. The protein is Large ribosomal subunit protein bL9 of Azotobacter vinelandii (strain DJ / ATCC BAA-1303).